The following is a 341-amino-acid chain: Mitochondrial dimethyladenosine transferase 1 (341 aa).

The N-terminal 27 residues, 1–27, are a transit peptide targeting the mitochondrion; it reads MASSRTLGTFRLPPLPTIREIIKLFRL. Positions 38, 63, 85, 86, 111, 112, and 141 each coordinate S-adenosyl-L-methionine.

It belongs to the class I-like SAM-binding methyltransferase superfamily. rRNA adenine N(6)-methyltransferase family. KsgA subfamily. Interacts with mitochondrial RNA polymerase POLRMT. Interacts with TFAM. Bound to the maturing mtSSU until the late stages of assembly.

It is found in the mitochondrion. The enzyme catalyses adenosine(N)/adenosine(N+1) in rRNA + 4 S-adenosyl-L-methionine = N(6)-dimethyladenosine(N)/N(6)-dimethyladenosine(N+1) in rRNA + 4 S-adenosyl-L-homocysteine + 4 H(+). Its function is as follows. Mitochondrial methyltransferase which uses S-adenosyl methionine to dimethylate two highly conserved adjacent adenosine residues (A1583 and A1584) within the loop of helix 45 at the 3-prime end of 12S rRNA, thereby regulating the assembly or stability of the small subunit of the mitochondrial ribosome. Also required for basal transcription of mitochondrial DNA, probably via its interaction with POLRMT and TFAM. Stimulates transcription independently of the methyltransferase activity. This Bos taurus (Bovine) protein is Mitochondrial dimethyladenosine transferase 1 (TFB1M).